We begin with the raw amino-acid sequence, 58 residues long: Large ribosomal subunit protein uL30 (58 aa).

Belongs to the universal ribosomal protein uL30 family. As to quaternary structure, part of the 50S ribosomal subunit.

The polypeptide is Large ribosomal subunit protein uL30 (Pseudomonas fluorescens (strain ATCC BAA-477 / NRRL B-23932 / Pf-5)).